The chain runs to 88 residues: MASGWANDDAVNEQINSTIEDAIARARGEIPRGESLDECEECGAPIPQARREAIPGVRLCIHCQQEKDLQKPAYTGYNRRGSKDSQLR.

The dksA C4-type zinc-finger motif lies at 39 to 63 (CEECGAPIPQARREAIPGVRLCIHC).

This is an uncharacterized protein from Escherichia coli (strain K12).